Consider the following 590-residue polypeptide: MQGTDNAPPGAQANKSSSPRRIRHVRRHYTSNDHRHTPSTAESNPVQRIRSGEECTVELSMSPGQPLVEEQPLVEERPPVEEQPLVEEQPLVEEQPLVEEQPLVEEQPLVEGQPLVEEQPLVEGQPPVEGQPLVEEQPLVEGQPLVEGQPLVEGQPLVEGQPLVGGQPLVGGQPLVEGQPLVEGQPPVKVQPLVEGQPLGNMVSLYDQLPRGSILSLQKGLTLAGVTTPVDMPPLAGVILLCAVLPLASVIPPASATPFAAVIPPAAVIPLPGFLPLGRLLHLADLLLRAGVLLLAGILPLAGAPPLAGVPPLAVALPLAGAPPLAGVPPLAGAPPLAGALPRAGVLRRAGVLRRAGVLRRAGVLRRAGVLRRAGVLRRAGVLRRAGVLRRAGVLRRAGVLRRADVLRRADVVLLAGVQQLADVQRLADVQRLADVQRLADVQRLADVQRLVCVTPLSVVSPLAAVIPAVAVIPVVAVIRVAAVIMLEKMQPQGSSPQLQMGCRRIRQRRSSPRTCQKLRQERDRAGISWREHVGRHMLCSSTRSRYCSHRLGAACRSHCRLRCGVLCLPHALTQPTRQERGVAEMMSTS.

Residues 1 to 71 (MQGTDNAPPG…SPGQPLVEEQ (71 aa)) form a disordered region. Over residues 18 to 29 (SPRRIRHVRRHY) the composition is skewed to basic residues. 27 repeat units span residues 66 to 71 (PLVEEQ), 72 to 77 (PLVEER), 78 to 83 (PPVEEQ), 84 to 89 (PLVEEQ), 90 to 95 (PLVEEQ), 96 to 101 (PLVEEQ), 102 to 107 (PLVEEQ), 108 to 113 (PLVEGQ), 114 to 119 (PLVEEQ), 120 to 125 (PLVEGQ), 126 to 131 (PPVEGQ), 132 to 137 (PLVEEQ), 138 to 143 (PLVEGQ), 144 to 149 (PLVEGQ), 150 to 155 (PLVEGQ), 156 to 161 (PLVEGQ), 162 to 167 (PLVGGQ), 168 to 173 (PLVGGQ), 174 to 179 (PLVEGQ), 180 to 185 (PLVEGQ), 300 to 305 (PLAGAP), 306 to 311 (PLAGVP), 312 to 317 (PLAVAL), 318 to 323 (PLAGAP), 324 to 329 (PLAGVP), 330 to 335 (PLAGAP), and 336 to 341 (PLAGAL). The interval 66–185 (PLVEEQPLVE…VEGQPLVEGQ (120 aa)) is 20 X 6 AA tandem repeats of P-[LP]-V-[EG]-[EG]-[QR]. The segment at 300–347 (PLAGAPPLAGVPPLAVALPLAGAPPLAGVPPLAGAPPLAGALPRAGVL) is 8 X 6 AA approximate tandem repeats of P-L-A-[GV]-[AV]-[PL]. The stretch at 342–347 (PRAGVL) is one 2-8; approximate repeat. 16 consecutive repeat copies span residues 348–353 (RRAGVL), 354–359 (RRAGVL), 360–365 (RRAGVL), 366–371 (RRAGVL), 372–377 (RRAGVL), 378–383 (RRAGVL), 384–389 (RRAGVL), 390–395 (RRAGVL), 396–401 (RRAGVL), 402–407 (RRADVL), 408–413 (RRADVV), 419–424 (QQLADV), 425–430 (QRLADV), 431–436 (QRLADV), 437–442 (QRLADV), and 443–448 (QRLADV). Residues 348–413 (RRAGVLRRAG…ADVLRRADVV (66 aa)) form an 11 X 6 AA tandem repeats of approximate R-R-A-[GD]-V-[LV] region. Positions 419 to 454 (QQLADVQRLADVQRLADVQRLADVQRLADVQRLVCV) are 6 X 6 AA approximate tandem repeats of Q-[QR]-L-A-D-V. The stretch at 449–454 (QRLVCV) is one 4-6; approximate repeat.

In terms of tissue distribution, somatic ovarian tissue.

In Ascaris suum (Pig roundworm), this protein is Ovarian abundant message protein (OAM).